A 642-amino-acid chain; its full sequence is RNA polymerase sigma factor RpoD (642 aa).

The disordered stretch occupies residues 199–228 (HLETTAPEKPSNDNSDENEDDEESEEDADE). The span at 212 to 228 (NSDENEDDEESEEDADE) shows a compositional bias: acidic residues. The tract at residues 403-473 (MIQANLRLVI…TRSIADQART (71 aa)) is sigma-70 factor domain-2. The short motif at 427 to 430 (DLIQ) is the Interaction with polymerase core subunit RpoC element. The interval 482 to 558 (ETINKMNRIS…DANNVAPADA (77 aa)) is sigma-70 factor domain-3. Residues 571 to 624 (ILESLTPREAKVLRMRFGIDMNTDHTLEEVGRQFDVTRERIRQIEAKALRKLRH) form a sigma-70 factor domain-4 region. Residues 597–616 (LEEVGRQFDVTRERIRQIEA) constitute a DNA-binding region (H-T-H motif).

The protein belongs to the sigma-70 factor family. RpoD/SigA subfamily. Interacts transiently with the RNA polymerase catalytic core.

It localises to the cytoplasm. In terms of biological role, sigma factors are initiation factors that promote the attachment of RNA polymerase to specific initiation sites and are then released. This sigma factor is the primary sigma factor during exponential growth. This chain is RNA polymerase sigma factor RpoD, found in Neisseria gonorrhoeae.